A 114-amino-acid chain; its full sequence is QDAAKGEALFKQCQTCHRADKNMVGPALAGVVGRKAGTAPGFSYSPLNHAAGEAGLVWSQENVVEYLADPNAFLKKFLTDKGQADKATGSTKMTFKLANEQQRKDVAAYLATLK.

Gln1 carries the post-translational modification Pyrrolidone carboxylic acid. Heme c-binding residues include Cys13, Cys16, His17, and Met93.

Belongs to the cytochrome c family. Post-translationally, binds 1 heme c group covalently per subunit.

It localises to the periplasm. In terms of biological role, cytochrome c2 is found mainly in purple, non-sulfur, photosynthetic bacteria where it functions as the electron donor to the oxidized bacteriochlorophyll in the photophosphorylation pathway. However, it may also have a role in the respiratory chain and is found in some non-photosynthetic bacteria. This is Cytochrome c2 from Rhodopseudomonas palustris.